Here is a 263-residue protein sequence, read N- to C-terminus: RNA exonuclease 4 (263 aa).

The interval 1-27 (MRLSSNWSKLQDGVTKKAGKKRIDKKP) is disordered. The span at 17-27 (KAGKKRIDKKP) shows a compositional bias: basic residues. The region spanning 95-247 (YIAMDCEFVG…EDARATMLIY (153 aa)) is the Exonuclease domain.

The protein belongs to the REXO4 family.

The protein resides in the nucleus. In terms of biological role, exoribonuclease involved in ribosome biosynthesis. Involved in the processing of ITS1, the internal transcribed spacer localized between the 18S and 5.8S rRNAs. In Candida glabrata (strain ATCC 2001 / BCRC 20586 / JCM 3761 / NBRC 0622 / NRRL Y-65 / CBS 138) (Yeast), this protein is RNA exonuclease 4 (REX4).